We begin with the raw amino-acid sequence, 60 residues long: Ribosome-inactivating protein dianthin-32 (60 aa).

Belongs to the ribosome-inactivating protein family. Type 1 RIP subfamily.

The catalysed reaction is Endohydrolysis of the N-glycosidic bond at one specific adenosine on the 28S rRNA.. Functionally, single-chain ribosome-inactivating protein. The protein is Ribosome-inactivating protein dianthin-32 of Dianthus caryophyllus (Carnation).